We begin with the raw amino-acid sequence, 191 residues long: GTP-dependent dephospho-CoA kinase (191 aa).

Asp46, Asp65, Lys67, and Glu122 together coordinate GTP.

It belongs to the GTP-dependent DPCK family.

It catalyses the reaction 3'-dephospho-CoA + GTP = GDP + CoA + H(+). Its pathway is cofactor biosynthesis; coenzyme A biosynthesis. Catalyzes the GTP-dependent phosphorylation of the 3'-hydroxyl group of dephosphocoenzyme A to form coenzyme A (CoA). In Methanopyrus kandleri (strain AV19 / DSM 6324 / JCM 9639 / NBRC 100938), this protein is GTP-dependent dephospho-CoA kinase.